Here is a 957-residue protein sequence, read N- to C-terminus: Collagen alpha-1(XXI) chain (957 aa).

A signal peptide spans 1–16; that stretch reads MPGIIYILCSILLIES. One can recognise a VWFA domain in the interval 37–211; it reads DLVFILDGSW…RIREIMKQKL (175 aa). In terms of domain architecture, Laminin G-like spans 230–412; that stretch reads GFDILLGLGI…LQKLRIYCDP (183 aa). Disordered stretches follow at residues 441–788 and 820–935; these read PAPC…GKEQ and CKTQ…DAGI. 8 consecutive Collagen-like domains span residues 448 to 501, 502 to 543, 544 to 591, 592 to 642, 643 to 684, 685 to 741, 742 to 786, and 825 to 882; these read PGEK…PRGF, AGLK…DKGD, IGID…EEGK, PGPP…ISGP, EGIS…IPGQ, QGYT…EIGE, HGHR…QQGK, and GSPG…GNKG. Residues 483 to 498 are compositionally biased toward low complexity; it reads TSGSPGIPGSPGVQGP. Residues 535–556 are compositionally biased toward basic and acidic residues; that stretch reads MGPKGDKGDIGIDGKKGTKGDK. 2 stretches are compositionally biased toward low complexity: residues 597 to 616 and 633 to 649; these read MEGLRGLPGIPGIPGNDGAN and PTGTPGISGPEGISGPQ. Residues 733-744 show a composition bias toward basic and acidic residues; sequence KGEKGEIGEHGH. The segment covering 775 to 786 has biased composition (low complexity); it reads QGLPGPKGQQGK.

It belongs to the fibril-associated collagens with interrupted helices (FACIT) family.

Its subcellular location is the secreted. It localises to the extracellular space. The protein localises to the extracellular matrix. It is found in the cytoplasm. This is Collagen alpha-1(XXI) chain (col21a1) from Xenopus laevis (African clawed frog).